The sequence spans 520 residues: UDP-N-acetylmuramoyl-L-alanyl-D-glutamate--2,6-diaminopimelate ligase (520 aa).

Leu48 serves as a coordination point for UDP-N-acetyl-alpha-D-muramoyl-L-alanyl-D-glutamate. 134–140 (GTSGKTT) provides a ligand contact to ATP. Residues 176–177 (TT), Ser203, and Arg211 each bind UDP-N-acetyl-alpha-D-muramoyl-L-alanyl-D-glutamate. Lys243 carries the N6-carboxylysine modification. Meso-2,6-diaminopimelate-binding positions include Arg405, 429–432 (DNPR), Gly483, and Glu487. A Meso-diaminopimelate recognition motif motif is present at residues 429–432 (DNPR).

The protein belongs to the MurCDEF family. MurE subfamily. Mg(2+) serves as cofactor. Carboxylation is probably crucial for Mg(2+) binding and, consequently, for the gamma-phosphate positioning of ATP.

The protein localises to the cytoplasm. The catalysed reaction is UDP-N-acetyl-alpha-D-muramoyl-L-alanyl-D-glutamate + meso-2,6-diaminopimelate + ATP = UDP-N-acetyl-alpha-D-muramoyl-L-alanyl-gamma-D-glutamyl-meso-2,6-diaminopimelate + ADP + phosphate + H(+). It functions in the pathway cell wall biogenesis; peptidoglycan biosynthesis. In terms of biological role, catalyzes the addition of meso-diaminopimelic acid to the nucleotide precursor UDP-N-acetylmuramoyl-L-alanyl-D-glutamate (UMAG) in the biosynthesis of bacterial cell-wall peptidoglycan. The protein is UDP-N-acetylmuramoyl-L-alanyl-D-glutamate--2,6-diaminopimelate ligase of Mycolicibacterium paratuberculosis (strain ATCC BAA-968 / K-10) (Mycobacterium paratuberculosis).